We begin with the raw amino-acid sequence, 768 residues long: Multidomain esterase (768 aa).

The signal sequence occupies residues 1–40 (MKKHFVVGETIKRFLRIGTSLALSISTLSLLPSAPRLSSA). Residues 41-264 (AGTIKIMPLG…YWLEQIEGYL (224 aa)) are acetylxylan esterase. Catalysis depends on Ser68, which acts as the Nucleophile; for acetylxylan esterase activity. Active-site for acetylxylan esterase activity residues include Asp240 and His243. Low complexity predominate over residues 267 to 283 (SDGPQQTQPTQPSQGDS). The tract at residues 267 to 289 (SDGPQQTQPTQPSQGDSGPELIY) is disordered. Residues 285 to 352 (PELIYGDLDG…IIGKIKEFTV (68 aa)) enclose the Dockerin domain. Residues 353 to 768 (AEKTVTEKPV…ADTFASKWLY (416 aa)) are glucuronoyl esterase. The GXSYXG catalytic site motif motif lies at 563-568 (GVSRYG). Ser565 (nucleophile; for glucuronoyl esterase activity) is an active-site residue. Residues Lys569, Glu633, and Trp679 each coordinate substrate.

It in the N-terminal section; belongs to the carbohydrate esterase 3 (CE3) family. The protein in the C-terminal section; belongs to the carbohydrate esterase 15 (CE15) family.

The protein localises to the secreted. The catalysed reaction is Deacetylation of xylans and xylo-oligosaccharides.. It carries out the reaction a 4-O-methyl-alpha-D-glucuronosyl ester derivative + H2O = 4-O-methyl-alpha-D-glucuronate derivative + an alcohol + H(+). The protein operates within glycan degradation; xylan degradation. Its function is as follows. Esterase involved in the degradation of plant cell wall polysaccharides. Catalyzes the deacetylation of chemically acetylated xylan and native, steam-extracted xylan. Seems to act in synergy with the xylanase XynD which produces xylo-oligosaccharides. Also catalyzes the deesterification of methyl esters of 4-O-methyl-D-glucuronic acid (MeGlcA) side residues in synthetic glucuronoxylan methyl ester, suggesting that it may be able to cleave ester linkages between MeGlcA carboxyl and more complex alcohols, including linkages between hemicellulose and lignin alcohols in plant cell walls. The protein is Multidomain esterase of Ruminococcus flavefaciens.